A 221-amino-acid polypeptide reads, in one-letter code: Cytidylate kinase (221 aa).

11 to 19 (GPCGAGKST) is a binding site for ATP.

The protein belongs to the cytidylate kinase family. Type 1 subfamily.

The protein localises to the cytoplasm. It catalyses the reaction CMP + ATP = CDP + ADP. The catalysed reaction is dCMP + ATP = dCDP + ADP. The polypeptide is Cytidylate kinase (Mycoplasmopsis agalactiae (strain NCTC 10123 / CIP 59.7 / PG2) (Mycoplasma agalactiae)).